Reading from the N-terminus, the 100-residue chain is Large ribosomal subunit protein bL21 (100 aa).

The protein belongs to the bacterial ribosomal protein bL21 family. Part of the 50S ribosomal subunit. Contacts protein L20.

Functionally, this protein binds to 23S rRNA in the presence of protein L20. The polypeptide is Large ribosomal subunit protein bL21 (Mycoplasma capricolum subsp. capricolum (strain California kid / ATCC 27343 / NCTC 10154)).